A 583-amino-acid chain; its full sequence is Probable phosphoglucomutase, cytoplasmic 1 (583 aa).

Alpha-D-glucose 1,6-bisphosphate-binding residues include Arg24 and Ser123. Ser123 (phosphoserine intermediate) is an active-site residue. The Mg(2+) site is built by Ser123, Asp299, Asp301, and Asp303. Phosphoserine is present on Ser123. Alpha-D-glucose 1,6-bisphosphate-binding residues include Asp303, Arg304, Thr367, Glu386, Ser388, and Lys399.

The protein belongs to the phosphohexose mutase family. As to quaternary structure, monomer. It depends on Mg(2+) as a cofactor.

The protein localises to the cytoplasm. It carries out the reaction alpha-D-glucose 1-phosphate = alpha-D-glucose 6-phosphate. It catalyses the reaction O-phospho-L-seryl-[protein] + alpha-D-glucose 1-phosphate = alpha-D-glucose 1,6-bisphosphate + L-seryl-[protein]. The catalysed reaction is alpha-D-glucose 1,6-bisphosphate + L-seryl-[protein] = O-phospho-L-seryl-[protein] + alpha-D-glucose 6-phosphate. Functionally, catalyzes the reversible isomerization of alpha-D-glucose 1-phosphate to alpha-D-glucose 6-phosphate. The mechanism proceeds via the intermediate compound alpha-D-glucose 1,6-bisphosphate. This enzyme participates in both the breakdown and synthesis of glucose. This is Probable phosphoglucomutase, cytoplasmic 1 from Arabidopsis thaliana (Mouse-ear cress).